The primary structure comprises 1034 residues: Protein argonaute 2 (1034 aa).

The tract at residues 1-201 is disordered; that stretch reads MEHERGGGGR…PMRRPDGGGS (201 aa). A compositionally biased stretch (gly residues) spans 18 to 125; sequence GGRGGGGGDG…ESGGGGGRGG (108 aa). The segment covering 172–187 has biased composition (low complexity); it reads VVRVQPPAPPVAVSRS. In terms of domain architecture, PAZ spans 391-504; that stretch reads PVLDLVQKSV…VPIELCDLLE (114 aa). One can recognise a Piwi domain in the interval 688–989; sequence LLFCPMSDQH…AAYRGRLYYE (302 aa).

The protein belongs to the argonaute family. Ago subfamily.

In terms of biological role, probably involved in the RNA silencing pathway. May bind to short RNAs such as microRNAs (miRNAs) or short interfering RNAs (siRNAs), and represses the translation of mRNAs which are complementary to them. The protein is Protein argonaute 2 (AGO2) of Oryza sativa subsp. japonica (Rice).